We begin with the raw amino-acid sequence, 316 residues long: Methionyl-tRNA formyltransferase (316 aa).

Position 112 to 115 (112 to 115) interacts with (6S)-5,6,7,8-tetrahydrofolate; that stretch reads SLLP.

The protein belongs to the Fmt family.

It carries out the reaction L-methionyl-tRNA(fMet) + (6R)-10-formyltetrahydrofolate = N-formyl-L-methionyl-tRNA(fMet) + (6S)-5,6,7,8-tetrahydrofolate + H(+). Functionally, attaches a formyl group to the free amino group of methionyl-tRNA(fMet). The formyl group appears to play a dual role in the initiator identity of N-formylmethionyl-tRNA by promoting its recognition by IF2 and preventing the misappropriation of this tRNA by the elongation apparatus. This chain is Methionyl-tRNA formyltransferase, found in Actinobacillus pleuropneumoniae serotype 5b (strain L20).